Consider the following 368-residue polypeptide: MAAYAAFKHVELYNVGKAKKRVLRPPGGGSSDIFGADMPATPRTVKNRMISNIFSADKDGAIKNNVRQGAHRFYFIGETPRRGQKSVDSHSRLFGEPSRPITPGKNHMKSSIPFGQNSEAAAAQKLLTNGNTNSTTNGHYNGKSGSVSSASSSVSSSTENLKINSGSRSVFRNMSTAAGADKMNKMDDPDCASLISQGNSGFADPVAQGGDTASIDMPCKSNDVGSLHGDNQSHTESGRYGYSSQSRRTAGTSPLNPYSLDKINSASAAFKEPLGPCSDYIKDPQHVPCIKIHAKDEHRNPITGLGLNGDGVGGLKPKKMKIREGNPVTGEGYKSGGSDSAQTPTMNGANQVINKNRVPPGGYSSGLW.

Position 30 is a phosphoserine (S30). Position 41 is a phosphothreonine (T41). Positions 81 to 93 (RRGQKSVDSHSRL) are enriched in basic and acidic residues. A disordered region spans residues 81 to 106 (RRGQKSVDSHSRLFGEPSRPITPGKN). A Phosphothreonine modification is found at T102. Phosphoserine is present on residues S111, S146, and S157. 2 stretches are compositionally biased toward low complexity: residues 129–157 (NGNT…VSSS) and 238–248 (GRYGYSSQSRR). Disordered stretches follow at residues 129–164 (NGNT…LKIN), 196–256 (SQGN…SPLN), and 316–368 (KPKK…SGLW). Positions 337–354 (GSDSAQTPTMNGANQVIN) are enriched in polar residues.

It belongs to the MAP Jupiter family.

The protein resides in the nucleus. It localises to the cytoplasm. Its subcellular location is the cytoskeleton. The protein localises to the spindle. Binds to all microtubule populations. This Drosophila willistoni (Fruit fly) protein is Microtubule-associated protein Jupiter.